The sequence spans 131 residues: Small ribosomal subunit protein uS8 (131 aa).

Belongs to the universal ribosomal protein uS8 family. As to quaternary structure, part of the 30S ribosomal subunit. Contacts proteins S5 and S12.

Its function is as follows. One of the primary rRNA binding proteins, it binds directly to 16S rRNA central domain where it helps coordinate assembly of the platform of the 30S subunit. The protein is Small ribosomal subunit protein uS8 of Finegoldia magna (strain ATCC 29328 / DSM 20472 / WAL 2508) (Peptostreptococcus magnus).